A 297-amino-acid polypeptide reads, in one-letter code: MSKVSDLYDVTWEDMRDKMKTWREDNYRNSEQIVDVGEELINEHASKLGDDVWIIYEQVMIAALDCGRDDIAMSCLQELRRQFPGSHRVKRLTGLRFEAMERYDDALQIYDRILQDDPTNTATRKRKIAIRKAQGRNAEAIRELNEYLEQFVGDQEAWHELAELYINELDYAKAAFCLEELILTNPHNHFYYQQFAEVKYTQGGLENLELSRKYFSQALKLNNHSMRALFGLYMSSVHIASNPKASAKMKKDNVKYATWATSQIKKAYQLAGRTMTDTQTSLKAVEDMLETLQITPS.

3 TPR repeats span residues His-87 to Asn-120, Gln-155 to Asn-188, and Tyr-192 to Ser-225.

It belongs to the EMC2 family. In terms of assembly, component of the ER membrane protein complex (EMC).

The protein resides in the endoplasmic reticulum membrane. In terms of biological role, part of the endoplasmic reticulum membrane protein complex (EMC) that enables the energy-independent insertion into endoplasmic reticulum membranes of newly synthesized membrane proteins. Preferentially accommodates proteins with transmembrane domains that are weakly hydrophobic or contain destabilizing features such as charged and aromatic residues. Involved in the cotranslational insertion of multi-pass membrane proteins in which stop-transfer membrane-anchor sequences become ER membrane spanning helices. It is also required for the post-translational insertion of tail-anchored/TA proteins in endoplasmic reticulum membranes. By mediating the proper cotranslational insertion of N-terminal transmembrane domains in an N-exo topology, with translocated N-terminus in the lumen of the ER, controls the topology of multi-pass membrane proteins. By regulating the insertion of various proteins in membranes, it is indirectly involved in many cellular processes. The polypeptide is ER membrane protein complex subunit 2-B (emc2-b) (Xenopus laevis (African clawed frog)).